The following is a 203-amino-acid chain: MLAIFLAALLFGFAFNVSPGAVFSETLRRGLTGGFRPALLVQLGSLIGDAVWALLGLTGLALLLGYEQVRIPLTLACAAYLAWLGVQGLRDAWSPPLAAEDAGEQGRNAFGAGAAISLSNPKNVVYWGALGSALAGIVDGTPNQAQSLVFFAGFMLSSLIWCFCCAALVDWLRRNTSLFWHRVSYAGCGVLLLGLAGLALRGL.

Transmembrane regions (helical) follow at residues 3-23 (AIFL…GAVF), 46-66 (LIGD…LLGY), 69-89 (VRIP…VQGL), 123-143 (NVVY…GTPN), and 149-169 (VFFA…AALV).

This sequence belongs to the Rht family.

It localises to the cell membrane. The chain is Chemotactic transduction protein ChpE (chpE) from Pseudomonas aeruginosa (strain ATCC 15692 / DSM 22644 / CIP 104116 / JCM 14847 / LMG 12228 / 1C / PRS 101 / PAO1).